Consider the following 415-residue polypeptide: Serine hydroxymethyltransferase (415 aa).

(6S)-5,6,7,8-tetrahydrofolate-binding positions include leucine 120 and 124–126; that span reads GHL. At lysine 229 the chain carries N6-(pyridoxal phosphate)lysine.

Belongs to the SHMT family. In terms of assembly, homodimer. It depends on pyridoxal 5'-phosphate as a cofactor.

The protein localises to the cytoplasm. It catalyses the reaction (6R)-5,10-methylene-5,6,7,8-tetrahydrofolate + glycine + H2O = (6S)-5,6,7,8-tetrahydrofolate + L-serine. The protein operates within one-carbon metabolism; tetrahydrofolate interconversion. Its pathway is amino-acid biosynthesis; glycine biosynthesis; glycine from L-serine: step 1/1. Its function is as follows. Catalyzes the reversible interconversion of serine and glycine with tetrahydrofolate (THF) serving as the one-carbon carrier. This reaction serves as the major source of one-carbon groups required for the biosynthesis of purines, thymidylate, methionine, and other important biomolecules. Also exhibits THF-independent aldolase activity toward beta-hydroxyamino acids, producing glycine and aldehydes, via a retro-aldol mechanism. The polypeptide is Serine hydroxymethyltransferase (Pelotomaculum thermopropionicum (strain DSM 13744 / JCM 10971 / SI)).